Here is a 129-residue protein sequence, read N- to C-terminus: ATP synthase epsilon chain (129 aa).

The protein belongs to the ATPase epsilon chain family. In terms of assembly, F-type ATPases have 2 components, CF(1) - the catalytic core - and CF(0) - the membrane proton channel. CF(1) has five subunits: alpha(3), beta(3), gamma(1), delta(1), epsilon(1). CF(0) has three main subunits: a, b and c.

The protein localises to the cell inner membrane. In terms of biological role, produces ATP from ADP in the presence of a proton gradient across the membrane. In Campylobacter jejuni subsp. jejuni serotype O:6 (strain 81116 / NCTC 11828), this protein is ATP synthase epsilon chain.